A 261-amino-acid chain; its full sequence is uncharacterized protein (261 aa).

The signal sequence occupies residues 1 to 22; the sequence is MGYLKKVGMCISLLIVIIFVTS. C23 is lipidated: N-palmitoyl cysteine. C23 carries the S-diacylglycerol cysteine lipid modification.

Belongs to the staphylococcal tandem lipoprotein family.

The protein localises to the cell membrane. This is an uncharacterized protein from Staphylococcus aureus (strain bovine RF122 / ET3-1).